Consider the following 221-residue polypeptide: Large ribosomal subunit protein uL16x (221 aa).

This sequence belongs to the universal ribosomal protein uL16 family. Component of the small ribosomal subunit. Mature ribosomes consist of a small (40S) and a large (60S) subunit. The 40S subunit contains about 33 different proteins and 1 molecule of RNA (18S). The 60S subunit contains about 49 different proteins and 3 molecules of RNA (25S, 5.8S and 5S).

In Arabidopsis thaliana (Mouse-ear cress), this protein is Large ribosomal subunit protein uL16x (RPL10C).